Reading from the N-terminus, the 172-residue chain is Ribosome maturation factor RimM (172 aa).

Positions 96–168 constitute a PRC barrel domain; that stretch reads DGEFYYHEII…RVDVEILEGL (73 aa).

Belongs to the RimM family. As to quaternary structure, binds ribosomal protein uS19.

The protein resides in the cytoplasm. In terms of biological role, an accessory protein needed during the final step in the assembly of 30S ribosomal subunit, possibly for assembly of the head region. Essential for efficient processing of 16S rRNA. May be needed both before and after RbfA during the maturation of 16S rRNA. It has affinity for free ribosomal 30S subunits but not for 70S ribosomes. The sequence is that of Ribosome maturation factor RimM from Streptococcus pneumoniae serotype 4 (strain ATCC BAA-334 / TIGR4).